The chain runs to 183 residues: Ferritin heavy chain (183 aa).

Methionine 1 carries the N-acetylmethionine modification. Threonine 2 carries the N-acetylthreonine; in Ferritin heavy chain, N-terminally processed modification. The Ferritin-like diiron domain occupies 11-160 (QNYHQDSEAA…DHVTNLRKMG (150 aa)). Fe cation-binding residues include glutamate 28, glutamate 63, histidine 66, glutamate 108, and glutamine 142. A phosphoserine mark is found at serine 179 and serine 183.

It belongs to the ferritin family. As to quaternary structure, oligomer of 24 subunits. There are two types of subunits: L (light) chain and H (heavy) chain. The major chain can be light or heavy, depending on the species and tissue type. The functional molecule forms a roughly spherical shell with a diameter of 12 nm and contains a central cavity into which the insoluble mineral iron core is deposited. Interacts with NCOA4; NCOA4 promotes targeting of the iron-binding ferritin complex to autolysosomes following starvation or iron depletion. As to expression, ubiquitous.

The protein resides in the cytoplasm. It is found in the lysosome. It localises to the cytoplasmic vesicle. Its subcellular location is the autophagosome. The catalysed reaction is 4 Fe(2+) + O2 + 4 H(+) = 4 Fe(3+) + 2 H2O. Its function is as follows. Stores iron in a soluble, non-toxic, readily available form. Important for iron homeostasis. Has ferroxidase activity. Iron is taken up in the ferrous form and deposited as ferric hydroxides after oxidation. Also plays a role in delivery of iron to cells. Mediates iron uptake in capsule cells of the developing kidney. Delivery to lysosomes is mediated by the cargo receptor NCOA4 for autophagic degradation and release of iron. The chain is Ferritin heavy chain (FTH1) from Trichosurus vulpecula (Brush-tailed possum).